We begin with the raw amino-acid sequence, 32 residues long: Photosystem I reaction center subunit XII (32 aa).

Residues 9-31 traverse the membrane as a helical segment; it reads VYVALVSALITSFLAVRLGLALY.

It belongs to the PsaM family.

Its subcellular location is the plastid. It localises to the chloroplast thylakoid membrane. This chain is Photosystem I reaction center subunit XII, found in Chaetosphaeridium globosum (Charophycean green alga).